We begin with the raw amino-acid sequence, 481 residues long: UDP-N-acetylmuramate--L-alanine ligase (481 aa).

Gly122 to Thr128 is a binding site for ATP.

This sequence belongs to the MurCDEF family.

Its subcellular location is the cytoplasm. It catalyses the reaction UDP-N-acetyl-alpha-D-muramate + L-alanine + ATP = UDP-N-acetyl-alpha-D-muramoyl-L-alanine + ADP + phosphate + H(+). It participates in cell wall biogenesis; peptidoglycan biosynthesis. Functionally, cell wall formation. The sequence is that of UDP-N-acetylmuramate--L-alanine ligase from Treponema pallidum (strain Nichols).